Here is a 300-residue protein sequence, read N- to C-terminus: Probable amino-acid ABC transporter periplasmic-binding protein y4tE (300 aa).

Residues 1 to 27 (MTHLKISKTAPAVARFLPAGRIASVAA) form the signal peptide.

It belongs to the bacterial solute-binding protein 3 family.

The protein resides in the periplasm. In terms of biological role, probably part of the binding-protein-dependent transport system y4tEFGH for an amino acid. In Sinorhizobium fredii (strain NBRC 101917 / NGR234), this protein is Probable amino-acid ABC transporter periplasmic-binding protein y4tE.